We begin with the raw amino-acid sequence, 241 residues long: uncharacterized protein (241 aa).

7 helical membrane passes run 12 to 32 (ITEI…LLLL), 39 to 59 (LLWL…EMKF), 89 to 109 (VYDV…ICYT), 117 to 137 (YYTF…NCVV), 152 to 172 (LFEY…ATML), 180 to 200 (IHFY…WFVY), and 215 to 235 (YVEA…SPLI).

It belongs to the mimivirus L68/R809 family.

Its subcellular location is the membrane. This is an uncharacterized protein from Acanthamoeba polyphaga mimivirus (APMV).